A 570-amino-acid polypeptide reads, in one-letter code: Putative ABC transporter ATP-binding protein SAV2684 (570 aa).

ABC transporter domains follow at residues 6–247 and 304–537; these read ISFK…GIRE and LELN…ASLR. ATP-binding positions include 40 to 47 and 338 to 345; these read GASGSGKS and GHNGAGKS.

Belongs to the ABC transporter superfamily.

The protein resides in the cell membrane. In terms of biological role, probably part of an ABC transporter complex. Responsible for energy coupling to the transport system. The protein is Putative ABC transporter ATP-binding protein SAV2684 of Staphylococcus aureus (strain Mu50 / ATCC 700699).